Consider the following 211-residue polypeptide: HTH-type transcriptional repressor FabR (211 aa).

Residues 10 to 70 (RTRRSLVEAA…TMVDESGLML (61 aa)) form the HTH tetR-type domain. A DNA-binding region (H-T-H motif) is located at residues 33–52 (SLREVAREAGIAPTSFYRHF).

Homodimer.

Its subcellular location is the cytoplasm. In terms of biological role, represses the transcription of fabB, involved in unsaturated fatty acid (UFA) biosynthesis. By controlling UFA production, FabR directly influences the physical properties of the membrane bilayer. This is HTH-type transcriptional repressor FabR from Cronobacter sakazakii (strain ATCC BAA-894) (Enterobacter sakazakii).